The chain runs to 239 residues: Protein GrpE (239 aa).

Disordered regions lie at residues 1-56 and 208-239; these read MIEN…KNTI and SMGPGKQNSQQEVEKDTVEEDVNSEVNTSEDV. The span at 40–53 shows a compositional bias: basic and acidic residues; it reads TSQKKEAINTEELK. A compositionally biased stretch (acidic residues) spans 224-239; sequence TVEEDVNSEVNTSEDV.

The protein belongs to the GrpE family. In terms of assembly, homodimer.

The protein resides in the cytoplasm. In terms of biological role, participates actively in the response to hyperosmotic and heat shock by preventing the aggregation of stress-denatured proteins, in association with DnaK and GrpE. It is the nucleotide exchange factor for DnaK and may function as a thermosensor. Unfolded proteins bind initially to DnaJ; upon interaction with the DnaJ-bound protein, DnaK hydrolyzes its bound ATP, resulting in the formation of a stable complex. GrpE releases ADP from DnaK; ATP binding to DnaK triggers the release of the substrate protein, thus completing the reaction cycle. Several rounds of ATP-dependent interactions between DnaJ, DnaK and GrpE are required for fully efficient folding. The sequence is that of Protein GrpE from Prochlorococcus marinus (strain MIT 9215).